Here is a 177-residue protein sequence, read N- to C-terminus: UPF0177 protein YxdF (177 aa).

The next 4 membrane-spanning stretches (helical) occupy residues 2–22, 30–50, 117–137, and 152–172; these read TLVLILIFIIAWKLGYLKNTL, IFWLMGIVFFTLATNYLVTVL, ALVHTGFSWYLLPYLILSFII, and IVHSSVNLFGGSAIKLLDTFF.

This sequence belongs to the UPF0177 family.

The protein resides in the cell membrane. This Lactococcus lactis subsp. lactis (strain IL1403) (Streptococcus lactis) protein is UPF0177 protein YxdF (yxdF).